Here is a 382-residue protein sequence, read N- to C-terminus: Histone acetyltransferase type B subunit 2 (382 aa).

WD repeat units lie at residues 98-138 (ENNA…RYSH), 141-181 (PHTK…TTFK), 184-224 (IQKD…VVSQ), 228-268 (ESSN…ENSG), and 275-315 (GHSE…EEQQ). Residues 317-321 (EDAED) are interaction with the histone H4 N-terminus. Residues 332 to 372 (GHTAGVSDLSWCPFKDWMIGSVADDNIVHLWEISKKLITNE) form a WD 6 repeat.

It belongs to the WD repeat RBAP46/RBAP48/MSI1 family. As to quaternary structure, component of the HAT-B complex composed of at least HAT1 and HAT2. The HAT-B complex binds to histone H4 tail.

It is found in the cytoplasm. Its subcellular location is the nucleus. In terms of biological role, regulatory subunit of the histone acetylase B (HAT-B) complex. The complex acetylates 'Lys-14' of histone H4 which is required for telomeric silencing. The protein is Histone acetyltransferase type B subunit 2 (HAT2) of Candida albicans (strain SC5314 / ATCC MYA-2876) (Yeast).